The primary structure comprises 357 residues: DNA primase small subunit PriS (357 aa).

Catalysis depends on residues D105, D107, and D259.

Belongs to the eukaryotic-type primase small subunit family. As to quaternary structure, heterodimer of a small subunit (PriS) and a large subunit (PriL). Requires Mg(2+) as cofactor. Mn(2+) is required as a cofactor.

Catalytic subunit of DNA primase, an RNA polymerase that catalyzes the synthesis of short RNA molecules used as primers for DNA polymerase during DNA replication. The small subunit contains the primase catalytic core and has DNA synthesis activity on its own. Binding to the large subunit stabilizes and modulates the activity, increasing the rate of DNA synthesis while decreasing the length of the DNA fragments, and conferring RNA synthesis capability. The DNA polymerase activity may enable DNA primase to also catalyze primer extension after primer synthesis. May also play a role in DNA repair. The sequence is that of DNA primase small subunit PriS from Methanococcus maripaludis (strain DSM 14266 / JCM 13030 / NBRC 101832 / S2 / LL).